The primary structure comprises 88 residues: Small ribosomal subunit protein uS15 (88 aa).

It belongs to the universal ribosomal protein uS15 family. In terms of assembly, part of the 30S ribosomal subunit. Forms a bridge to the 50S subunit in the 70S ribosome, contacting the 23S rRNA.

Its function is as follows. One of the primary rRNA binding proteins, it binds directly to 16S rRNA where it helps nucleate assembly of the platform of the 30S subunit by binding and bridging several RNA helices of the 16S rRNA. In terms of biological role, forms an intersubunit bridge (bridge B4) with the 23S rRNA of the 50S subunit in the ribosome. This chain is Small ribosomal subunit protein uS15, found in Hydrogenovibrio crunogenus (strain DSM 25203 / XCL-2) (Thiomicrospira crunogena).